A 118-amino-acid chain; its full sequence is Small ribosomal subunit protein uS13 (118 aa).

A disordered region spans residues 94 to 118 (GLPVRGQRTKTNARTRKGPRKPIKK).

It belongs to the universal ribosomal protein uS13 family. Part of the 30S ribosomal subunit. Forms a loose heterodimer with protein S19. Forms two bridges to the 50S subunit in the 70S ribosome.

Located at the top of the head of the 30S subunit, it contacts several helices of the 16S rRNA. In the 70S ribosome it contacts the 23S rRNA (bridge B1a) and protein L5 of the 50S subunit (bridge B1b), connecting the 2 subunits; these bridges are implicated in subunit movement. Contacts the tRNAs in the A and P-sites. The polypeptide is Small ribosomal subunit protein uS13 (Histophilus somni (strain 129Pt) (Haemophilus somnus)).